A 200-amino-acid polypeptide reads, in one-letter code: MAASAGPEIERLIGLLAKLPGLGPRSARRAALALLKRRDQLLAPLSDALAEAAARVKTCSTCGSLDTQDPCAICSDGTRDASLICVVEEVGALWAMERAGAFRGRYHVLGGLLSALDGVGPDALRVGPLVARASEPGVREVILALPATVDGQTTAHYLAERLAGAEVTVSMLARGVPVGGELDWLDDGTIAQAMRARRPA.

The C4-type zinc-finger motif lies at 59-74 (CSTCGSLDTQDPCAIC). The Toprim domain maps to 82–177 (SLICVVEEVG…TVSMLARGVP (96 aa)).

This sequence belongs to the RecR family.

Functionally, may play a role in DNA repair. It seems to be involved in an RecBC-independent recombinational process of DNA repair. It may act with RecF and RecO. This is Recombination protein RecR from Phenylobacterium zucineum (strain HLK1).